The following is a 417-amino-acid chain: RH-like protein IC (417 aa).

Transmembrane regions (helical) follow at residues 12–32 (CLPL…YFFT), 44–64 (LVAS…GFGF), 77–97 (VAFN…LDGF), 125–145 (ISAG…MVLV), 172–192 (FYVF…KPLP), 203–223 (TIPS…WPSF), 238–258 (VFNT…VSSL), 265–285 (INMT…GTSC), 287–307 (LITS…ISIG), 331–351 (NFSL…VLHT), and 358–378 (MVGF…AIAV).

Belongs to the ammonium transporter (TC 2.A.49) family. Rh subfamily.

It localises to the membrane. Functionally, may be part of an oligomeric complex which is likely to have a transport or channel function in the erythrocyte membrane. This is RH-like protein IC from Gorilla gorilla gorilla (Western lowland gorilla).